Consider the following 333-residue polypeptide: Glutamyl endopeptidase (333 aa).

The signal sequence occupies residues 1 to 29 (MKGKFLKVSSLFVATLTTATLVSSPAANA). The propeptide occupies 30–68 (LSSKAMDNHPQQSQSSKQQTPKIQKGGNLKPLEQREHAN). Residues 33–61 (KAMDNHPQQSQSSKQQTPKIQKGGNLKPL) form a disordered region. A compositionally biased stretch (low complexity) spans 40–54 (QQSQSSKQQTPKIQK). Active-site charge relay system residues include H119, D161, and S237. The disordered stretch occupies residues 283 to 333 (FANDDQPNNPDNPDNPNNPDNPNNPDNPNNPNNPDNPDNGDNNNSDNPDAA). Residues 286–333 (DDQPNNPDNPDNPNNPDNPNNPDNPNNPNNPDNPDNGDNNNSDNPDAA) are compositionally biased toward low complexity. Repeat copies occupy residues 289-291 (PNN), 292-294 (PDN), 295-297 (PDN), 298-300 (PNN), 301-303 (PDN), 304-306 (PNN), 307-309 (PDN), 310-312 (PNN), 313-315 (PNN), 316-318 (PDN), and 319-321 (PDN). Positions 289 to 321 (PNNPDNPDNPNNPDNPNNPDNPNNPNNPDNPDN) are 11 X 3 AA repeats of P-[DN]-N.

This sequence belongs to the peptidase S1B family. Proteolytically cleaved by aureolysin (aur). This cleavage leads to the activation of SspA.

It localises to the secreted. The enzyme catalyses Preferential cleavage: Glu-|-Xaa, Asp-|-Xaa.. In terms of biological role, preferentially cleaves peptide bonds on the carboxyl-terminal side of aspartate and glutamate. Along with other extracellular proteases it is involved in colonization and infection of human tissues. Required for proteolytic maturation of thiol protease SspB and inactivation of SspC, an inhibitor of SspB. It is the most important protease for degradation of fibronectin-binding protein (FnBP) and surface protein A, which are involved in adherence to host cells. May also protect bacteria against host defense mechanism by cleaving the immunoglobulin classes IgG, IgA and IgM. May be involved in the stability of secreted lipases. In Staphylococcus aureus (strain MSSA476), this protein is Glutamyl endopeptidase (sspA).